The primary structure comprises 431 residues: Glucose-1-phosphate adenylyltransferase (431 aa).

A beta-D-fructose 1,6-bisphosphate-binding site is contributed by K39. AMP is bound by residues R40, H46, and R52. An alpha-D-glucose 1-phosphate-binding site is contributed by Y114. Position 130 (R130) interacts with AMP. Alpha-D-glucose 1-phosphate is bound by residues G179, E194–K195, and S212. AMP contacts are provided by E370 and R386. Residues R419–R423 and Q429–R431 each bind beta-D-fructose 1,6-bisphosphate.

It belongs to the bacterial/plant glucose-1-phosphate adenylyltransferase family. As to quaternary structure, homotetramer.

The catalysed reaction is alpha-D-glucose 1-phosphate + ATP + H(+) = ADP-alpha-D-glucose + diphosphate. It participates in glycan biosynthesis; glycogen biosynthesis. Allosterically activated by fructose-1,6-bisphosphate (F16BP) and inhibited by AMP. In terms of biological role, involved in the biosynthesis of ADP-glucose, a building block required for the elongation reactions to produce glycogen. Catalyzes the reaction between ATP and alpha-D-glucose 1-phosphate (G1P) to produce pyrophosphate and ADP-Glc. This is Glucose-1-phosphate adenylyltransferase from Salmonella paratyphi A (strain ATCC 9150 / SARB42).